A 423-amino-acid chain; its full sequence is Gamma-glutamyl phosphate reductase (423 aa).

It belongs to the gamma-glutamyl phosphate reductase family.

Its subcellular location is the cytoplasm. It catalyses the reaction L-glutamate 5-semialdehyde + phosphate + NADP(+) = L-glutamyl 5-phosphate + NADPH + H(+). It functions in the pathway amino-acid biosynthesis; L-proline biosynthesis; L-glutamate 5-semialdehyde from L-glutamate: step 2/2. Its function is as follows. Catalyzes the NADPH-dependent reduction of L-glutamate 5-phosphate into L-glutamate 5-semialdehyde and phosphate. The product spontaneously undergoes cyclization to form 1-pyrroline-5-carboxylate. The chain is Gamma-glutamyl phosphate reductase from Paraburkholderia phytofirmans (strain DSM 17436 / LMG 22146 / PsJN) (Burkholderia phytofirmans).